Here is a 409-residue protein sequence, read N- to C-terminus: MLNGRAVDTSRRPLRKIKLSLMGPAFIAAIAYIDPGNFATNIQAGATFGYTLLWVVVWANVMAMLVQLLSAKLGIATGKNLAEHIRDRFPRPVVWAYWVQAEIIVMATDLAEFIGAAIGFKLLFGVTLLQGAVLTGIATFLILMLQNRGQKPLELVIGGLLLFVAAAYIVELIFSQPDIAALGRGMLIPNLPDGNAVFLAAGVLGATIMPHVIYLHSALTQTGGEESKTERYASTKFDVAIAMTIAGFVNLAMMATAAAAFHFNGYENIAEIEEAYITLQPLLGNAAATVFGLSLIAAGLSSTVVGTLAGQVVMQGFVRFYIPMWVRRIVTMLPSFIVILAGMDATQILVMSQVLLSFGIALALVPLLVFTGNKELMGELVDTKTTQILGKLVVLIVVGLNAYLLISLL.

Helical transmembrane passes span 19-39 (LSLM…GNFA), 46-66 (ATFG…AMLV), 98-118 (WVQA…GAAI), 122-142 (LLFG…TFLI), 155-175 (LVIG…LIFS), 196-216 (AVFL…IYLH), 241-261 (IAMT…AAAF), 290-310 (VFGL…TLAG), 320-340 (FYIP…IVIL), 348-368 (ILVM…VPLL), and 388-408 (ILGK…LISL).

Belongs to the NRAMP family.

The protein resides in the cell inner membrane. H(+)-stimulated, divalent metal cation uptake system. This is Divalent metal cation transporter MntH from Yersinia pseudotuberculosis serotype O:1b (strain IP 31758).